Here is a 194-residue protein sequence, read N- to C-terminus: Thymidine kinase (194 aa).

Residues 9 to 16 (GAMNSGKT) and 85 to 88 (DECQ) contribute to the ATP site. Glu-86 functions as the Proton acceptor in the catalytic mechanism. The Zn(2+) site is built by Cys-143, Cys-146, Cys-180, and His-183.

Belongs to the thymidine kinase family. Homotetramer.

It localises to the cytoplasm. It catalyses the reaction thymidine + ATP = dTMP + ADP + H(+). The chain is Thymidine kinase from Enterococcus faecalis (strain ATCC 700802 / V583).